Here is a 174-residue protein sequence, read N- to C-terminus: ATP-dependent protease subunit HslV (174 aa).

T2 is an active-site residue. 3 residues coordinate Na(+): G157, C160, and T163.

Belongs to the peptidase T1B family. HslV subfamily. In terms of assembly, a double ring-shaped homohexamer of HslV is capped on each side by a ring-shaped HslU homohexamer. The assembly of the HslU/HslV complex is dependent on binding of ATP.

The protein localises to the cytoplasm. It carries out the reaction ATP-dependent cleavage of peptide bonds with broad specificity.. With respect to regulation, allosterically activated by HslU binding. In terms of biological role, protease subunit of a proteasome-like degradation complex believed to be a general protein degrading machinery. The sequence is that of ATP-dependent protease subunit HslV from Shewanella woodyi (strain ATCC 51908 / MS32).